A 398-amino-acid chain; its full sequence is Lysophospholipid transporter LplT (398 aa).

The next 12 membrane-spanning stretches (helical) occupy residues M16–A36, I53–A73, A91–V111, L139–A159, I163–Y183, S195–W213, L227–L247, A253–A273, M286–F306, A310–L330, I344–L364, and V372–L392.

This sequence belongs to the major facilitator superfamily. LplT (TC 2.A.1.42) family.

It is found in the cell inner membrane. Its function is as follows. Catalyzes the facilitated diffusion of 2-acyl-glycero-3-phosphoethanolamine (2-acyl-GPE) into the cell. In Serratia proteamaculans (strain 568), this protein is Lysophospholipid transporter LplT.